Reading from the N-terminus, the 270-residue chain is Nuclease PA3 (270 aa).

Residues Trp-1, His-6, His-15, Asp-45, and His-60 each coordinate a divalent metal cation. A substrate-binding site is contributed by 1 to 6 (WGALGH). Substrate-binding positions include 45–51 (DEYRLTS), 60–63 (HFID), and 73–78 (NVDYER). 2 cysteine pairs are disulfide-bonded: Cys-72–Cys-217 and Cys-80–Cys-85. Substrate is bound at residue Asn-92. N-linked (GlcNAc...) asparagine glycosylation occurs at Asn-92. The a divalent metal cation site is built by His-116, Asp-120, and His-126. Positions 116-164 (HFIGDMTQPLHDEAYAVGGNKINVTFDGYHDNLHSDWDTYMPQKLIGGH) are substrate binding. Asn-138 is a glycosylation site (N-linked (GlcNAc...) asparagine). 2 residues coordinate a divalent metal cation: His-149 and Asp-153. N-linked (GlcNAc...) asparagine glycosylation is found at Asn-184 and Asn-197.

Belongs to the nuclease type I family. Zn(2+) serves as cofactor.

It localises to the secreted. It catalyses the reaction a ribonucleoside 3'-phosphate + H2O = a ribonucleoside + phosphate. In terms of biological role, hydrolyzes only single-stranded DNA and RNA without apparent specificity for bases. The chain is Nuclease PA3 from Penicillium sp.